The following is a 506-amino-acid chain: SPbeta prophage-derived uncharacterized protein YonE (506 aa).

A disordered region spans residues 473 to 506; sequence YTFTGNEVGRPNEGNKNNDNTVKSATSNGNDNPI. Residues 486 to 506 show a composition bias toward polar residues; sequence GNKNNDNTVKSATSNGNDNPI.

The protein is SPbeta prophage-derived uncharacterized protein YonE (yonE) of Bacillus subtilis (strain 168).